The chain runs to 607 residues: Glucose-6-phosphate isomerase, glycosomal (607 aa).

Glu411 acts as the Proton donor in catalysis. Active-site residues include His442 and Lys571. The Microbody targeting signal signature appears at 605–607; sequence SHL.

The protein belongs to the GPI family. Homodimer.

The protein localises to the glycosome. It catalyses the reaction alpha-D-glucose 6-phosphate = beta-D-fructose 6-phosphate. It functions in the pathway carbohydrate degradation; glycolysis; D-glyceraldehyde 3-phosphate and glycerone phosphate from D-glucose: step 2/4. This is Glucose-6-phosphate isomerase, glycosomal (PGI) from Trypanosoma brucei brucei.